Here is a 297-residue protein sequence, read N- to C-terminus: NAD kinase (297 aa).

Asp-74 serves as the catalytic Proton acceptor. Residues 74–75 (DG), Arg-79, 148–149 (NE), Arg-176, Asp-178, 189–194 (TAYALS), and Gln-248 each bind NAD(+).

The protein belongs to the NAD kinase family. The cofactor is a divalent metal cation.

The protein localises to the cytoplasm. The catalysed reaction is NAD(+) + ATP = ADP + NADP(+) + H(+). In terms of biological role, involved in the regulation of the intracellular balance of NAD and NADP, and is a key enzyme in the biosynthesis of NADP. Catalyzes specifically the phosphorylation on 2'-hydroxyl of the adenosine moiety of NAD to yield NADP. This Blochmanniella pennsylvanica (strain BPEN) protein is NAD kinase.